The following is a 665-amino-acid chain: Protein Fe65 homolog (665 aa).

Residues 1–12 (MREGTPRVRIEV) are compositionally biased toward basic and acidic residues. Disordered regions lie at residues 1-43 (MREG…DTAT) and 90-111 (SRGYSSAGRGQKGRREEERRRN). The segment covering 14 to 24 (KGSNRPSQFVS) has biased composition (polar residues). 2 stretches are compositionally biased toward basic and acidic residues: residues 27-40 (EEQRLQRVQSRDSD) and 102-111 (GRREEERRRN). The WW domain maps to 233 to 266 (KDLPPGWEKHEDPQGYSYYWHVDSGTIQRQPPPP). 2 PID domains span residues 330-456 (VRFA…RDIC) and 499-615 (FLGV…VLDA).

In terms of assembly, interacts (via PID 2 domain) with apl-1 (via cytoplasmic domain). In terms of processing, phosphorylated. Expressed in the pharynx (including pharyngeal muscle and nerve cells), ventral nerve cord and tail neurons.

The protein localises to the cytoplasm. It is found in the cytoskeleton. Modulates pharyngeal pumping activity, at least in part by regulating expression of the acetylcholinesterase genes ace-1 and ace-2. This chain is Protein Fe65 homolog, found in Caenorhabditis elegans.